The following is a 494-amino-acid chain: Neuronal acetylcholine receptor subunit alpha-6 (494 aa).

An N-terminal signal peptide occupies residues 1–31 (MHPKRRLCWCLPASGAWAFMLTSLIADTTAC). Residues 32–240 (ESEERLFHKL…TYSFYIRRLP (209 aa)) are Extracellular-facing. N-linked (GlcNAc...) asparagine glycosylation is found at asparagine 54 and asparagine 171. Cysteine 158 and cysteine 172 are disulfide-bonded. A run of 3 helical transmembrane segments spans residues 241–265 (MFYT…FYLP), 272–290 (VTLC…LVIT), and 306–327 (YLLF…VLNI). The Cytoplasmic segment spans residues 328-468 (HYRTPTTHTM…WKYVAMVIDR (141 aa)). The interval 364-390 (KNISKKTKKGSAKTSGKSKHSKHKDNK) is disordered. A compositionally biased stretch (basic residues) spans 366–390 (ISKKTKKGSAKTSGKSKHSKHKDNK). Residues 469-489 (VFLWVFIILCVFGTAGLFIQP) form a helical membrane-spanning segment.

Belongs to the ligand-gated ion channel (TC 1.A.9) family. Acetylcholine receptor (TC 1.A.9.1) subfamily. Alpha-6/CHRNA6 sub-subfamily. Neuronal AChR is composed of two different types of subunits: alpha and non-alpha (beta). CHRNA6/alpha-6 subunit can be combined to CHRNB2/beta-2, CHRNA4/alpha-4 and CHRNB3/beta-3 to give rise to functional receptors. Heteropentamers containing CHRNB3 have an stoichiometry of (CHRNA6:CHRNB2)2:CHRNB3. Interacts with LYPD6.

The protein resides in the synaptic cell membrane. The catalysed reaction is K(+)(in) = K(+)(out). It carries out the reaction Na(+)(in) = Na(+)(out). The enzyme catalyses Ca(2+)(in) = Ca(2+)(out). Its activity is regulated as follows. Activated by a myriad of ligands such as acetylcholine, cytisine and nicotine. CHRNA6 nAChR activity is inhibited by the antagonists alpha-conotoxin MII and PIA, a small disulfide-constrained peptides from cone snails. Component of neuronal acetylcholine receptors (nAChRs) that function as pentameric, ligand-gated cation channels with high calcium permeability among other activities. nAChRs are excitatory neurotrasnmitter receptors formed by a collection of nAChR subunits known to mediate synaptic transmission in the nervous system and the neuromuscular junction. Each nAchR subunit confers differential attributes to channel properties, including activation, deactivation and desensitization kinetics, pH sensitivity, cation permeability, and binding to allosteric modulators. CHRNA6 forms pentameric channels with CHRNB2 and CHRNA4 that exhibit high sensitivity to ACh and nicotine and are predominantly expressed in only a few brain areas, including dopaminergic neurons, norepirephrine neurons and cells of the visual system. nAChrs containing CHRNA6 subunits mediate endogenous cholinergic modulation of dopamine and gamma-aminobutyric acid (GABA) release in response to nicotine at nerve terminals. Its function is as follows. Component of neuronal acetylcholine receptors (nAChRs) that function as pentameric, ligand-gated cation channels with high calcium permeability among other activities. nAChRs are excitatory neurotrasnmitter receptors formed by a collection of nAChR subunits known to mediate synaptic transmission in the nervous system and the neuromuscular junction. Each nAchR subunit confers differential attributes to channel properties, including activation, deactivation and desensitization kinetics, pH sensitivity, cation permeability, and binding to allosteric modulators. CHRNA6 forms pentameric channels with CHRNB2, CHRNB3 and CHRNA4 that exhibit high sensitivity to ACh and nicotine and are predominantly expressed in only a few brain areas, including dopaminergic neurons, norepirephrine neurons and cells of the visual system. nAChrs containing CHRNA6 subunits mediate endogenous cholinergic modulation of dopamine and gamma-aminobutyric acid (GABA) release in response to nicotine at nerve terminals. This chain is Neuronal acetylcholine receptor subunit alpha-6 (CHRNA6), found in Gallus gallus (Chicken).